The primary structure comprises 132 residues: Large ribosomal subunit protein eL8 (132 aa).

The residue at position 8 (K8) is an N6-acetyllysine; alternate. Residue K8 forms a Glycyl lysine isopeptide (Lys-Gly) (interchain with G-Cter in SUMO2); alternate linkage. Residue K36 forms a Glycyl lysine isopeptide (Lys-Gly) (interchain with G-Cter in SUMO2) linkage. K128 is modified (N6-acetyllysine).

Belongs to the eukaryotic ribosomal protein eL8 family. In terms of assembly, component of the large ribosomal subunit. Interacts with CRY1. Interacts with DICER1, AGO2, TARBP2, MOV10 and EIF6; they form a large RNA-induced silencing complex (RISC).

It localises to the cytoplasm. Functionally, component of the large ribosomal subunit. The ribosome is a large ribonucleoprotein complex responsible for the synthesis of proteins in the cell. The chain is Large ribosomal subunit protein eL8 (RPL7A) from Sus scrofa (Pig).